Reading from the N-terminus, the 670-residue chain is Sodium/glucose cotransporter 2 (670 aa).

Residues 1–20 (MEGHVEEGSELGEQKVLIDN) are Extracellular-facing. Residues 21–42 (PADILVIAAYFLLVIGVGLWSM) traverse the membrane as a helical segment. Topologically, residues 43-61 (FRTNRGTVGGYFLAGRSMV) are cytoplasmic. The chain crosses the membrane as a helical span at residues 62-83 (WWPVGASLFASNIGSGHFVGLA). Positions 71 and 74 each coordinate Na(+). Residues 84 to 91 (GTGAASGL) lie on the Extracellular side of the membrane. The helical transmembrane segment at 92–112 (AVAGFEWNALFVVLLLGWLFV) threads the bilayer. Topologically, residues 113–134 (PVYLTAGVITMPQYLRKRFGGR) are cytoplasmic. A helical membrane pass occupies residues 135 to 164 (RIRLYLSVLSLFLYIFTKISVDMFSGAVFI). Residues 165-171 (QQALGWN) are Extracellular-facing. 2 helical membrane passes run 172–193 (IYASVIALLGITMIYTVTGGLA) and 194–215 (ALMYTDTVQTFVILAGAFILTG). Over 216-273 (YAFHEVGGYSGLFDKYLGAVTSLTVSKDPAVGNISSTCYQPRPDSYHLLRDPVTGGLP) the chain is Extracellular. The N-linked (GlcNAc...) asparagine glycan is linked to N248. Intrachain disulfides connect C253/C509, C343/C349, C353/C359, and C515/C520. Residues 274 to 293 (WPALLLGLTIVSGWHWCSDQ) traverse the membrane as a helical segment. The Cytoplasmic segment spans residues 294-307 (VIVQRCLAGKNLTH). A helical transmembrane segment spans residues 308 to 329 (IKAGCILCGYLKLMPMFLMVMP). Topologically, residues 330–373 (GMISRILYPDEVACVVPEVCKRVCGTEVGCSNIAYPRLVVKLMP) are extracellular. The helical transmembrane segment at 374–404 (NGLRGLMLAVMLAALMSSLASIFNSSSTLFT) threads the bilayer. The Na(+) site is built by A387, S390, and S391. The Cytoplasmic segment spans residues 405 to 422 (MDIYTRLRPRAGDRELLL). The helical transmembrane segment at 423 to 444 (VGRLWVVFIVAVSVAWLPVVQA) threads the bilayer. Topologically, residues 445–449 (AQGGQ) are extracellular. Residues 450–475 (LFDYIQSVSSYLAPPVSAVFVLALFV) traverse the membrane as a helical segment. Residues 476-480 (PRVNE) lie on the Cytoplasmic side of the membrane. The chain crosses the membrane as a helical span at residues 481 to 503 (KGAFWGLIGGLLMGLARLIPEFF). The Extracellular segment spans residues 504–521 (FGTGSCVRPSACPAIFCR). Residues 522-545 (VHYLYFAIILFFCSGFLTLAISRC) traverse the membrane as a helical segment. Residues 546–649 (TAPIPQKHLH…DISEDPSWAR (104 aa)) are Cytoplasmic-facing. A helical transmembrane segment spans residues 650 to 668 (VVNLNALLMMTVAVFLWGF). Residues 669 to 670 (YA) are Extracellular-facing.

Belongs to the sodium:solute symporter (SSF) (TC 2.A.21) family. In terms of assembly, forms a heterodimer (via TM13) with PDZK1IP1 (via N-terminal transmembrane helix); this interaction enhances SLC5A2 transporter activity. Glycosylated at a single site. In terms of tissue distribution, kidney, in proximal tubule S1 segments.

It is found in the apical cell membrane. The catalysed reaction is D-glucose(out) + Na(+)(out) = D-glucose(in) + Na(+)(in). Its activity is regulated as follows. Enhanced by the interaction with PDZK1IP1/MAP17. Functionally, electrogenic Na(+)-coupled sugar symporter that actively transports D-glucose at the plasma membrane, with a Na(+) to sugar coupling ratio of 1:1. Transporter activity is driven by a transmembrane Na(+) electrochemical gradient set by the Na(+)/K(+) pump. Unlike SLC5A1/SGLT1, requires the auxiliary protein PDZK1IP1/MAP17 for full transporter activity. Has a primary role in D-glucose reabsorption from glomerular filtrate across the brush border of the early proximal tubules of the kidney. The sequence is that of Sodium/glucose cotransporter 2 (Slc5a2) from Rattus norvegicus (Rat).